We begin with the raw amino-acid sequence, 159 residues long: NAD(P)H-quinone oxidoreductase subunit N (159 aa).

Belongs to the complex I NdhN subunit family. In terms of assembly, NDH-1 can be composed of about 15 different subunits; different subcomplexes with different compositions have been identified which probably have different functions.

The protein resides in the cell inner membrane. The enzyme catalyses a plastoquinone + NADH + (n+1) H(+)(in) = a plastoquinol + NAD(+) + n H(+)(out). It catalyses the reaction a plastoquinone + NADPH + (n+1) H(+)(in) = a plastoquinol + NADP(+) + n H(+)(out). In terms of biological role, NDH-1 shuttles electrons from an unknown electron donor, via FMN and iron-sulfur (Fe-S) centers, to quinones in the respiratory and/or the photosynthetic chain. The immediate electron acceptor for the enzyme in this species is believed to be plastoquinone. Couples the redox reaction to proton translocation, and thus conserves the redox energy in a proton gradient. Cyanobacterial NDH-1 also plays a role in inorganic carbon-concentration. The protein is NAD(P)H-quinone oxidoreductase subunit N of Gloeobacter violaceus (strain ATCC 29082 / PCC 7421).